Here is a 73-residue protein sequence, read N- to C-terminus: DNA-directed RNA polymerase subunit omega (73 aa).

This sequence belongs to the RNA polymerase subunit omega family. As to quaternary structure, the RNAP catalytic core consists of 2 alpha, 1 beta, 1 beta' and 1 omega subunit. When a sigma factor is associated with the core the holoenzyme is formed, which can initiate transcription.

The catalysed reaction is RNA(n) + a ribonucleoside 5'-triphosphate = RNA(n+1) + diphosphate. Functionally, promotes RNA polymerase assembly. Latches the N- and C-terminal regions of the beta' subunit thereby facilitating its interaction with the beta and alpha subunits. This is DNA-directed RNA polymerase subunit omega from Lactobacillus delbrueckii subsp. bulgaricus (strain ATCC BAA-365 / Lb-18).